The chain runs to 409 residues: Isocitrate dehydrogenase [NADP] 1 (409 aa).

NADP(+) is bound by residues lysine 75, threonine 78, threonine 80, and arginine 85. Residues aspartate 255, aspartate 278, and aspartate 282 each coordinate Mn(2+). Residues glycine 313, threonine 314, valine 315, histidine 318, and asparagine 331 each contribute to the NADP(+) site.

This sequence belongs to the isocitrate and isopropylmalate dehydrogenases family. Homodimer. Requires Mg(2+) as cofactor. It depends on Mn(2+) as a cofactor.

It carries out the reaction D-threo-isocitrate + NADP(+) = 2-oxoglutarate + CO2 + NADPH. In terms of biological role, catalyzes the oxidative decarboxylation of isocitrate to 2-oxoglutarate and carbon dioxide with the concomitant reduction of NADP(+). This Mycobacterium bovis (strain ATCC BAA-935 / AF2122/97) protein is Isocitrate dehydrogenase [NADP] 1 (icd).